A 369-amino-acid chain; its full sequence is Ribonuclease 3 (369 aa).

The 137-residue stretch at 6-142 folds into the RNase III domain; the sequence is IGFVQSSINY…IIGAVAADCD (137 aa). Mg(2+) is bound at residue Glu-46. Asp-50 is an active-site residue. Positions 128 and 131 each coordinate Mg(2+). Glu-131 is a catalytic residue. The DRBM domain maps to 272–341; that stretch reads NPASTLHELF…SLKLLKFIAK (70 aa).

Belongs to the ribonuclease III family. As to quaternary structure, homodimer. Mg(2+) serves as cofactor.

It is found in the cytoplasm. The enzyme catalyses Endonucleolytic cleavage to 5'-phosphomonoester.. Its function is as follows. Digests double-stranded RNA. Involved in the processing of primary rRNA transcript to yield the immediate precursors to the large and small rRNAs (23S and 16S). Processes some mRNAs, and tRNAs when they are encoded in the rRNA operon. Processes pre-crRNA and tracrRNA of type II CRISPR loci if present in the organism. The sequence is that of Ribonuclease 3 (rnc) from Treponema succinifaciens (strain ATCC 33096 / DSM 2489 / 6091).